The sequence spans 575 residues: Suppressor of tumorigenicity 7 protein-like (575 aa).

Transmembrane regions (helical) follow at residues 36–56 and 80–100; these read GLAG…LYAL and FYVA…IFEW. The tract at residues 125 to 147 is disordered; that stretch reads GTESSISEPGSPSRNRENETSRQ. The span at 126–137 shows a compositional bias: polar residues; the sequence is TESSISEPGSPS.

It belongs to the ST7 family.

It localises to the membrane. The chain is Suppressor of tumorigenicity 7 protein-like (ST7L) from Homo sapiens (Human).